Consider the following 150-residue polypeptide: Large ribosomal subunit protein bL9 (150 aa).

This sequence belongs to the bacterial ribosomal protein bL9 family.

Functionally, binds to the 23S rRNA. The protein is Large ribosomal subunit protein bL9 of Streptococcus agalactiae serotype III (strain NEM316).